We begin with the raw amino-acid sequence, 317 residues long: Pinoresinol reductase 1 (317 aa).

Residues T18, Y20, I21, R41, K50, S90, G91, R95, N98, S121, and E122 each coordinate NADP(+). A (-)-pinoresinol-binding site is contributed by M125. NADP(+)-binding residues include K144 and F166. K144 functions as the Proton acceptor in the catalytic mechanism. Positions 177 and 178 each coordinate (-)-pinoresinol.

This sequence belongs to the NmrA-type oxidoreductase family. Isoflavone reductase subfamily. As to quaternary structure, forms homodimers. As to expression, expressed in roots and stems.

The catalysed reaction is (-)-lariciresinol + NADP(+) = (-)-pinoresinol + NADPH + H(+). It catalyses the reaction (+)-lariciresinol + NADP(+) = (+)-pinoresinol + NADPH + H(+). Reductase involved in lignan biosynthesis. Involved in secondary cell wall biosynthesis in fiber cells. Unlike conventional pinoresinol reductases that can reduce both pinoresinol and lariciresinol, PRR1 shows a strict substrate preference toward pinoresinol. Active on both (+) and (-)-pinoresinol. Abstracts the 4R-hydride from the NADPH cofactor during catalysis. In Arabidopsis thaliana (Mouse-ear cress), this protein is Pinoresinol reductase 1.